Reading from the N-terminus, the 409-residue chain is UV excision repair protein RAD23 homolog B (409 aa).

The region spanning 1–79 is the Ubiquitin-like domain; the sequence is MQVTLKTLQQ…VVVMVTKPKA (79 aa). Residues 80–175 are disordered; it reads VSTPAPATTQ…STSGDSSRSN (96 aa). The span at 81-143 shows a compositional bias: low complexity; sequence STPAPATTQQ…SSEPAPASAA (63 aa). Over residues 144–153 the composition is skewed to basic and acidic residues; sequence KQEKPAEKPA. Phosphothreonine is present on Thr-155. Ser-160 is modified (phosphoserine). Residues 160–175 are compositionally biased toward polar residues; sequence SPTATDSTSGDSSRSN. Thr-164 carries the post-translational modification Phosphothreonine. Residue Ser-174 is modified to Phosphoserine. At Thr-186 the chain carries Phosphothreonine. The UBA 1 domain occupies 188–228; it reads QSYENMVTEIMSMGYEREQVIAALRASFNNPDRAVEYLLMG. Ser-199 is subject to Phosphoserine. Phosphotyrosine is present on Tyr-202. Positions 236–276 are disordered; sequence QAVVDPPQAASTGAPQSSAVAAAAATTTATTTTTSSGGHPL. Positions 252–271 are enriched in low complexity; that stretch reads SSAVAAAAATTTATTTTTSS. One can recognise an STI1 domain in the interval 274–317; sequence HPLEFLRNQPQFQQMRQIIQQNPSLLPALLQQIGRENPQLLQQI. A UBA 2 domain is found at 364–404; it reads PQEKEAIERLKALGFPEGLVIQAYFACEKNENLAANFLLQQ.

It belongs to the RAD23 family. Component of the XPC complex composed of XPC, RAD23B and CETN2. Interacts with NGLY1 and PSMC1. Interacts with ATXN3. Interacts with PSMD4 and PSMC5. Interacts with AMFR. Interacts with VCP; the interaction is indirect and mediated by NGLY1.

It localises to the nucleus. The protein resides in the cytoplasm. Functionally, multiubiquitin chain receptor involved in modulation of proteasomal degradation. Binds to polyubiquitin chains. Proposed to be capable to bind simultaneously to the 26S proteasome and to polyubiquitinated substrates and to deliver ubiquitinated proteins to the proteasome. May play a role in endoplasmic reticulum-associated degradation (ERAD) of misfolded glycoproteins by association with PNGase and delivering deglycosylated proteins to the proteasome. Involved in global genome nucleotide excision repair (GG-NER) by acting as component of the XPC complex. Cooperatively with CETN2 appears to stabilize XPC. May protect XPC from proteasomal degradation. Its function is as follows. The XPC complex is proposed to represent the first factor bound at the sites of DNA damage and together with other core recognition factors, XPA, RPA and the TFIIH complex, is part of the pre-incision (or initial recognition) complex. The XPC complex recognizes a wide spectrum of damaged DNA characterized by distortions of the DNA helix such as single-stranded loops, mismatched bubbles or single-stranded overhangs. The orientation of XPC complex binding appears to be crucial for inducing a productive NER. XPC complex is proposed to recognize and to interact with unpaired bases on the undamaged DNA strand which is followed by recruitment of the TFIIH complex and subsequent scanning for lesions in the opposite strand in a 5'-to-3' direction by the NER machinery. Cyclobutane pyrimidine dimers (CPDs) which are formed upon UV-induced DNA damage esacpe detection by the XPC complex due to a low degree of structural perurbation. Instead they are detected by the UV-DDB complex which in turn recruits and cooperates with the XPC complex in the respective DNA repair. In vitro, the XPC:RAD23B dimer is sufficient to initiate NER; it preferentially binds to cisplatin and UV-damaged double-stranded DNA and also binds to a variety of chemically and structurally diverse DNA adducts. XPC:RAD23B contacts DNA both 5' and 3' of a cisplatin lesion with a preference for the 5' side. XPC:RAD23B induces a bend in DNA upon binding. XPC:RAD23B stimulates the activity of DNA glycosylases TDG and SMUG1. The sequence is that of UV excision repair protein RAD23 homolog B (RAD23B) from Homo sapiens (Human).